A 96-amino-acid polypeptide reads, in one-letter code: MESPVKEHREGTLIRVRVNPDADTTDLKGVDEWRGVLEVDVAAPPVKGKANRELLEFLGRKLNTTCELVSGEKSREKLVLARDVSVDEVKERLGLR.

It belongs to the UPF0235 family.

This is UPF0235 protein MK0273 from Methanopyrus kandleri (strain AV19 / DSM 6324 / JCM 9639 / NBRC 100938).